The primary structure comprises 335 residues: Ubiquinol oxidase 1b, mitochondrial (335 aa).

Residues 1–47 constitute a mitochondrion transit peptide; that stretch reads MSSRMAGATLLRHLGPRLFAAEPVYSGLAASARGVMPAAARIFPARM. Residues 160–180 form a helical membrane-spanning segment; that stretch reads ALLLETVAGVPGMVGGMLLHL. Fe cation is bound by residues Glu-164, Glu-203, and His-206. Residues 222-242 traverse the membrane as a helical segment; the sequence is ALVLAAQGVFFNAYFVGYLVS. Positions 254, 305, and 308 each coordinate Fe cation.

This sequence belongs to the alternative oxidase family. Fe cation is required as a cofactor.

It is found in the mitochondrion inner membrane. The enzyme catalyses 2 a ubiquinol + O2 = 2 a ubiquinone + 2 H2O. Its function is as follows. Catalyzes the cyanide-resistant oxidation of ubiquinol and the reduction of molecular oxygen to water, but does not translocate protons and consequently is not linked to oxidative phosphorylation. May increase respiration when the cytochrome respiratory pathway is restricted, or in response to low temperatures. The sequence is that of Ubiquinol oxidase 1b, mitochondrial from Oryza sativa subsp. japonica (Rice).